A 436-amino-acid chain; its full sequence is Chromosomal replication initiator protein DnaA (436 aa).

The domain I, interacts with DnaA modulators stretch occupies residues 1 to 80 (MSHEAVWQHV…QAPRFELRVV (80 aa)). Residues 80 to 100 (VPGVVVQEDIFQAAPAEAPRP) form a domain II region. Positions 101 to 317 (KLNPKYTFEN…GALMRAIAFA (217 aa)) are domain III, AAA+ region. 4 residues coordinate ATP: Gly145, Gly147, Lys148, and Thr149. The segment at 318–436 (SLNGVELTRA…LLRTLREACT (119 aa)) is domain IV, binds dsDNA.

The protein belongs to the DnaA family. Oligomerizes as a right-handed, spiral filament on DNA at oriC.

The protein resides in the cytoplasm. It catalyses the reaction ATP + H2O = ADP + phosphate + H(+). Plays an essential role in the initiation and regulation of chromosomal replication. ATP-DnaA binds to the origin of replication (oriC) to initiate formation of the DNA replication initiation complex once per cell cycle. Binds the DnaA box (a 9 base pair repeat at the origin) and separates the double-stranded (ds)DNA. Forms a right-handed helical filament on oriC DNA; dsDNA binds to the exterior of the filament while single-stranded (ss)DNA is stabiized in the filament's interior. The ATP-DnaA-oriC complex binds and stabilizes one strand of the AT-rich DNA unwinding element (DUE), permitting loading of DNA polymerase. After initiation quickly degrades to an ADP-DnaA complex that is not apt for DNA replication. Binds acidic phospholipids. Functionally, the DnaA box consensus is 5'-TTATC[CA]A[CA]A-3' in this bacterium; oriC consists of 13 clustered DnaA boxes and a 40 base pair AT-rich region. ATP-DnaA binds cooperatively to multiple DnaA boxes, while ADP-DnaA binds with low cooperativity to the individual DnaA boxes. About 16-18 DnaA protein molecules bind their sites in oriC. Has a slow ATPase activity. Binds linear and supercoiled DNA. The chain is Chromosomal replication initiator protein DnaA from Thermus thermophilus (strain ATCC 27634 / DSM 579 / HB8).